We begin with the raw amino-acid sequence, 100 residues long: Small ribosomal subunit protein bS6 (100 aa).

This sequence belongs to the bacterial ribosomal protein bS6 family.

Binds together with bS18 to 16S ribosomal RNA. The polypeptide is Small ribosomal subunit protein bS6 (Tropheryma whipplei (strain TW08/27) (Whipple's bacillus)).